Reading from the N-terminus, the 253-residue chain is tRNA uridine(34) hydroxylase (253 aa).

Residues 127-221 (HGRPLVLLDT…YFEDVGGEGY (95 aa)) form the Rhodanese domain. The active-site Cysteine persulfide intermediate is C181.

Belongs to the TrhO family.

The catalysed reaction is uridine(34) in tRNA + AH2 + O2 = 5-hydroxyuridine(34) in tRNA + A + H2O. In terms of biological role, catalyzes oxygen-dependent 5-hydroxyuridine (ho5U) modification at position 34 in tRNAs. The chain is tRNA uridine(34) hydroxylase from Xanthomonas campestris pv. campestris (strain B100).